The primary structure comprises 125 residues: Large ribosomal subunit protein bL12 (125 aa).

Belongs to the bacterial ribosomal protein bL12 family. In terms of assembly, homodimer. Part of the ribosomal stalk of the 50S ribosomal subunit. Forms a multimeric L10(L12)X complex, where L10 forms an elongated spine to which 2 to 4 L12 dimers bind in a sequential fashion. Binds GTP-bound translation factors.

Forms part of the ribosomal stalk which helps the ribosome interact with GTP-bound translation factors. Is thus essential for accurate translation. This is Large ribosomal subunit protein bL12 from Mesorhizobium japonicum (strain LMG 29417 / CECT 9101 / MAFF 303099) (Mesorhizobium loti (strain MAFF 303099)).